Here is a 209-residue protein sequence, read N- to C-terminus: Kynurenine formamidase (209 aa).

F18 serves as a coordination point for substrate. Zn(2+) contacts are provided by H48, H52, and D54. H58 acts as the Proton donor/acceptor in catalysis. The Zn(2+) site is built by H160 and E172.

This sequence belongs to the Cyclase 1 superfamily. KynB family. In terms of assembly, homodimer. Zn(2+) serves as cofactor.

It carries out the reaction N-formyl-L-kynurenine + H2O = L-kynurenine + formate + H(+). The protein operates within amino-acid degradation; L-tryptophan degradation via kynurenine pathway; L-kynurenine from L-tryptophan: step 2/2. In terms of biological role, catalyzes the hydrolysis of N-formyl-L-kynurenine to L-kynurenine, the second step in the kynurenine pathway of tryptophan degradation. The protein is Kynurenine formamidase of Bordetella bronchiseptica (strain ATCC BAA-588 / NCTC 13252 / RB50) (Alcaligenes bronchisepticus).